Here is a 547-residue protein sequence, read N- to C-terminus: Cellodextrinase (547 aa).

Residue Asp-148 is the Nucleophile of the active site. Active-site residues include His-474, Asp-520, and Glu-529.

Belongs to the glycosyl hydrolase 9 (cellulase E) family.

The protein resides in the secreted. It carries out the reaction Endohydrolysis of (1-&gt;4)-beta-D-glucosidic linkages in cellulose, lichenin and cereal beta-D-glucans.. With respect to regulation, is not inhibited by methylcellulose. Glycoside hydrolase that rapidly hydrolyzes short-chain cellodextrins to yield either cellobiose or cellobiose and glucose as end products; cellobiose is not hydrolyzed further. Also shows limited activity against endoglucanase specific substrates (carboxymethylcellulose (CMC), lichenan, laminarin and xylan). The sequence is that of Cellodextrinase from Butyrivibrio fibrisolvens.